An 891-amino-acid chain; its full sequence is Kinesin-like protein KIN-UB (891 aa).

A disordered region spans residues 1–54 (MSGKVANATPKAAAGKPRLSAAGGGAYRRTSSGPLPSAGGGGGRASSESGVSSR). Positions 45–54 (ASSESGVSSR) are enriched in low complexity. The region spanning 54-400 (RVRVAVRLRP…IMFGQRAMKV (347 aa)) is the Kinesin motor domain. An ATP-binding site is contributed by 139–146 (GQTGTGKT). The D-BOX signature appears at 370-378 (RTSLVVTIG). Positions 502-592 (TSSEVGEVQN…ADETRRSLDR (91 aa)) form a coiled coil. Positions 586–595 (TRRSLDRGDG) are enriched in basic and acidic residues. The interval 586–626 (TRRSLDRGDGSGKIFPGFDSLMSHSRNSQPREQSNGPKPPI) is disordered. The segment covering 607 to 621 (MSHSRNSQPREQSNG) has biased composition (polar residues). ARM repeat units follow at residues 623-662 (KPPIAKLFEQVGLQKILSLLESEEPDVRVHAVKVVANLAA), 664-704 (EANQ…NLAM), 706-746 (ETNQ…NLCG), and 748-787 (DKLQTRLRGEGGIKALLGMVKCGHPDVLAQVARGIANFAK).

Belongs to the TRAFAC class myosin-kinesin ATPase superfamily. Kinesin family. Ungrouped subfamily.

It is found in the cytoplasm. Its subcellular location is the cytoskeleton. This chain is Kinesin-like protein KIN-UB, found in Oryza sativa subsp. japonica (Rice).